The chain runs to 191 residues: MIESTIISQLEEASAVLSNFIEQEKKQNSIAKAADVITSSLKQGGKIISCGNGGSSCDAMHFAEELTGRYRENRKAIPAISISDPSHMSCVANDYGYKFVFSRYLEALGNKGDVLLAISTSGNSENVLEAVKEAKNKGMFVVALTGKDGGKLLPLADVCINVPHVGYADRIQEVHIKIIHTLILLIEQSLL.

One can recognise an SIS domain in the interval 37–191 (ITSSLKQGGK…LILLIEQSLL (155 aa)). 52 to 54 (NGG) is a binding site for substrate. Residues H61 and E65 each contribute to the Zn(2+) site. Residues E65, 93–94 (ND), 119–121 (STS), S124, and Q172 contribute to the substrate site. Residues Q172 and H180 each contribute to the Zn(2+) site.

Belongs to the SIS family. GmhA subfamily. The cofactor is Zn(2+).

The protein resides in the cytoplasm. It catalyses the reaction 2 D-sedoheptulose 7-phosphate = D-glycero-alpha-D-manno-heptose 7-phosphate + D-glycero-beta-D-manno-heptose 7-phosphate. The protein operates within carbohydrate biosynthesis; D-glycero-D-manno-heptose 7-phosphate biosynthesis; D-glycero-alpha-D-manno-heptose 7-phosphate and D-glycero-beta-D-manno-heptose 7-phosphate from sedoheptulose 7-phosphate: step 1/1. Its function is as follows. Catalyzes the isomerization of sedoheptulose 7-phosphate in D-glycero-D-manno-heptose 7-phosphate. The sequence is that of Phosphoheptose isomerase from Cytophaga hutchinsonii (strain ATCC 33406 / DSM 1761 / CIP 103989 / NBRC 15051 / NCIMB 9469 / D465).